A 54-amino-acid polypeptide reads, in one-letter code: Photosystem II reaction center protein K (54 aa).

The propeptide occupies 1–17 (MSFENFAIITLKENVFA). A helical transmembrane segment spans residues 33 to 53 (LPIIPVLFLLLAFVWQSAVKF).

It belongs to the PsbK family. PSII is composed of 1 copy each of membrane proteins PsbA, PsbB, PsbC, PsbD, PsbE, PsbF, PsbH, PsbI, PsbJ, PsbK, PsbL, PsbM, PsbT, PsbY, PsbZ, Psb30/Ycf12, at least 3 peripheral proteins of the oxygen-evolving complex and a large number of cofactors. It forms dimeric complexes.

The protein resides in the plastid. Its subcellular location is the chloroplast thylakoid membrane. Its function is as follows. One of the components of the core complex of photosystem II (PSII). PSII is a light-driven water:plastoquinone oxidoreductase that uses light energy to abstract electrons from H(2)O, generating O(2) and a proton gradient subsequently used for ATP formation. It consists of a core antenna complex that captures photons, and an electron transfer chain that converts photonic excitation into a charge separation. This Euglena deses protein is Photosystem II reaction center protein K.